The primary structure comprises 812 residues: Protein let-653 (812 aa).

The first 21 residues, 1-21 (MRHPLISLLLLIAFYSTSSEA), serve as a signal peptide directing secretion. 2 Apple domains span residues 26 to 116 (CNSF…WKYC) and 123 to 209 (CSGE…ENNC). Disulfide bonds link Cys26–Cys116, Cys53–Cys88, Cys57–Cys72, Cys123–Cys209, Cys154–Cys178, and Cys158–Cys166. N-linked (GlcNAc...) asparagine glycosylation is found at Asn172, Asn211, and Asn272. In terms of domain architecture, ZP spans 221–725 (ECRDNGISVS…NTCDDVEGCD (505 aa)). Composition is skewed to low complexity over residues 375 to 449 (QVTT…STTT) and 496 to 584 (PTTT…PASS). Disordered regions lie at residues 375-461 (QVTT…STIM) and 494-584 (DVPT…PASS). Asn771 carries N-linked (GlcNAc...) asparagine glycosylation.

Cleaved at the C-terminal domain. In terms of tissue distribution, expressed in external cuticle-producing epithelial cells including the epidermis, vulva, rectum, excretory duct and excretory pore.

The protein localises to the apical cell membrane. Its subcellular location is the secreted. It localises to the extracellular space. Required for epithelial tube development and shaping. Involved in the morphogenesis and function of the three unicellular tubes of the excretory system, the canal cell, the duct cell and the pore cell. Also plays a role in cuticle development, alae formation and shaping of the vulval lumen. Required for larval development. The sequence is that of Protein let-653 from Caenorhabditis elegans.